We begin with the raw amino-acid sequence, 352 residues long: Probable protein phosphatase 2C 42 (352 aa).

The PPM-type phosphatase domain maps to 26–321; it reads AYASSAMQGY…DNMSVILVRF (296 aa). Mn(2+)-binding residues include aspartate 62, glycine 63, aspartate 267, and aspartate 312. The segment at 328-352 is disordered; it reads RGARAATSSTSTGTVPSRHSKSISL. Residues 329–341 show a composition bias toward low complexity; sequence GARAATSSTSTGT.

It belongs to the PP2C family. Requires Mg(2+) as cofactor. The cofactor is Mn(2+).

It catalyses the reaction O-phospho-L-seryl-[protein] + H2O = L-seryl-[protein] + phosphate. The catalysed reaction is O-phospho-L-threonyl-[protein] + H2O = L-threonyl-[protein] + phosphate. The protein is Probable protein phosphatase 2C 42 of Oryza sativa subsp. japonica (Rice).